The primary structure comprises 664 residues: Intraflagellar transport protein 70A2 (664 aa).

TPR repeat units follow at residues 11–44 (DGEFTAVVYRLIRDSRYSEAVQLLSAELQRSSRS), 45–78 (RAGLSLLAYCYYRLQEFELAAECYEQLSQMHPEL), 153–186 (PDGLVNMGCLLYKEGHYEAACSKFFAALQASGYQ), 188–220 (DVSYNLALACYSNRHYAPALKHIANIIERGIRQ), 395–423 (QVQEARHNRDDEVVIKAVNEYDETLEKYI), 424–456 (PVLMAQAKIYWNLENYPMVEKIFRKSVEFCNDH), and 458–491 (VWKLNVAHVLFMQENKYKEAIGFYEPIVKKNYDN). Positions 507–534 (YIMTSQNEEAEELMRKIEKEEEQLSYGD) form a coiled coil. The TPR 8 repeat unit spans residues 543 to 576 (CIVNLVIGTLYCAKGNYDFGISRVIKSLEPYHKK).

Belongs to the TTC30/dfy-1/fleer family. Interacts wit the IFT B complex component IFT52.

It is found in the cell projection. The protein localises to the cilium. Functionally, required for polyglutamylation of axonemal tubulin. Plays a role in anterograde intraflagellar transport (IFT), the process by which cilia precursors are transported from the base of the cilium to the site of their incorporation at the tip. The chain is Intraflagellar transport protein 70A2 (Ift70a2) from Mus musculus (Mouse).